We begin with the raw amino-acid sequence, 582 residues long: Cryptochrome DASH, chloroplastic/mitochondrial (582 aa).

The transit peptide at 1–49 (MLHFLSSSSPLNPQFLLLPRQSARLRVLLSIPVSAMSSSSSSSSRGALA) directs the protein to the chloroplast and mitochondrion. The region spanning 84-234 (GVAIVWFRND…KLQLIWGATL (151 aa)) is the Photolyase/cryptochrome alpha/beta domain. A disordered region spans residues 560 to 582 (GHQKRDQQFNRQRRPGHMYRRQK). Positions 570–582 (RQRRPGHMYRRQK) are enriched in basic residues.

It belongs to the DNA photolyase class-1 family. FAD is required as a cofactor. It depends on (6R)-5,10-methylene-5,6,7,8-tetrahydrofolate as a cofactor.

It is found in the plastid. It localises to the chloroplast. Its subcellular location is the mitochondrion. Its function is as follows. May have a photoreceptor function. Binds ss- and ds-DNA in a sequence non-specific manner, lacks photolyase activity. This Oryza sativa subsp. japonica (Rice) protein is Cryptochrome DASH, chloroplastic/mitochondrial (CRYD).